Here is a 218-residue protein sequence, read N- to C-terminus: Small ribosomal subunit protein uS3c (218 aa).

The KH type-2 domain occupies 47–118; the sequence is IQKTIKISSG…KLNIAITRIA (72 aa).

It belongs to the universal ribosomal protein uS3 family. Part of the 30S ribosomal subunit.

It localises to the plastid. The protein localises to the chloroplast. The protein is Small ribosomal subunit protein uS3c (rps3) of Lotus japonicus (Lotus corniculatus var. japonicus).